The primary structure comprises 449 residues: Histidinol dehydrogenase (449 aa).

Tyr136, Gln204, and Asn232 together coordinate NAD(+). The substrate site is built by Thr255, Gln277, and His280. Zn(2+)-binding residues include Gln277 and His280. Residues Glu346 and His347 each act as proton acceptor in the active site. Substrate is bound by residues His347, Asp380, Glu434, and His439. A Zn(2+)-binding site is contributed by Asp380. Position 439 (His439) interacts with Zn(2+).

This sequence belongs to the histidinol dehydrogenase family. The cofactor is Zn(2+).

It catalyses the reaction L-histidinol + 2 NAD(+) + H2O = L-histidine + 2 NADH + 3 H(+). It participates in amino-acid biosynthesis; L-histidine biosynthesis; L-histidine from 5-phospho-alpha-D-ribose 1-diphosphate: step 9/9. Its function is as follows. Catalyzes the sequential NAD-dependent oxidations of L-histidinol to L-histidinaldehyde and then to L-histidine. In Mycobacterium leprae (strain TN), this protein is Histidinol dehydrogenase (hisD).